The following is a 351-amino-acid chain: Outer membrane porin PhoE (351 aa).

An N-terminal signal peptide occupies residues 1 to 21; it reads MKKSTLALVVMGITASASVQA.

The protein belongs to the Gram-negative porin family. As to quaternary structure, homotrimer.

It is found in the cell outer membrane. Uptake of inorganic phosphate, phosphorylated compounds, and some other negatively charged solutes. The protein is Outer membrane porin PhoE (phoE) of Citrobacter freundii.